The chain runs to 248 residues: Homeobox protein CHOX-CAD (248 aa).

The segment at residues 137–196 is a DNA-binding region (homeobox); the sequence is KDKYRVVYTDHQRLELEKEFHYSRYITIRRKAELAAALGLTERQVKIWFQNRRAKERKVN. A disordered region spans residues 192-248; the sequence is ERKVNKKKLQQQSQPTSTTTPTPPAVGTPGPMGTLCSGSAPSLVSSSPLTIKEEFMP. 2 stretches are compositionally biased toward low complexity: residues 201-211 and 228-240; these read QQQSQPTSTTT and SGSA…SSPL.

Belongs to the Caudal homeobox family.

Its subcellular location is the nucleus. In terms of biological role, may play an important role during the early steps of organogenesis. In Gallus gallus (Chicken), this protein is Homeobox protein CHOX-CAD (CHOX-CAD1).